A 148-amino-acid chain; its full sequence is UPF0756 membrane protein NMA2160 (148 aa).

The next 4 membrane-spanning stretches (helical) occupy residues 13 to 35 (LILL…LLLM), 50 to 70 (HGLN…LVSG), 80 to 100 (FLNF…WLAG), and 121 to 141 (VIGV…AGIL).

The protein belongs to the UPF0756 family.

The protein localises to the cell membrane. The polypeptide is UPF0756 membrane protein NMA2160 (Neisseria meningitidis serogroup A / serotype 4A (strain DSM 15465 / Z2491)).